The following is a 348-amino-acid chain: uncharacterized protein (348 aa).

A disordered region spans residues 132 to 348 (SECRRSSDAL…QGTRRDSARL (217 aa)). Residues 161–178 (STAPIPNAAISSARSSAR) show a composition bias toward low complexity. Positions 192–207 (SRSSSETRSPGGTVQP) are enriched in polar residues. The span at 227–273 (AAGSLLPAPRPPASSASSPQAAAPAAPSATRLPRRTTPSAPRPSSRP) shows a compositional bias: low complexity. The span at 274–287 (ARPPIPAARPPPRR) shows a compositional bias: pro residues. Residues 288–310 (TPGTPRPAAARARAPAGCSPARR) show a composition bias toward low complexity.

This is an uncharacterized protein from Streptomyces fradiae (Streptomyces roseoflavus).